The chain runs to 424 residues: UDP-N-acetylglucosamine 1-carboxyvinyltransferase (424 aa).

22–23 is a phosphoenolpyruvate binding site; it reads KN. Arginine 93 lines the UDP-N-acetyl-alpha-D-glucosamine pocket. Cysteine 117 serves as the catalytic Proton donor. Cysteine 117 carries the post-translational modification 2-(S-cysteinyl)pyruvic acid O-phosphothioketal. Residues 122 to 126, aspartate 307, and valine 329 each bind UDP-N-acetyl-alpha-D-glucosamine; that span reads RPIDL.

The protein belongs to the EPSP synthase family. MurA subfamily.

It is found in the cytoplasm. The catalysed reaction is phosphoenolpyruvate + UDP-N-acetyl-alpha-D-glucosamine = UDP-N-acetyl-3-O-(1-carboxyvinyl)-alpha-D-glucosamine + phosphate. The protein operates within cell wall biogenesis; peptidoglycan biosynthesis. Cell wall formation. Adds enolpyruvyl to UDP-N-acetylglucosamine. This Chlorobium limicola (strain DSM 245 / NBRC 103803 / 6330) protein is UDP-N-acetylglucosamine 1-carboxyvinyltransferase.